A 489-amino-acid chain; its full sequence is MKRELLKLSILEAHRCLKNKDFSARELTEAYIGAVEQDTLNAFVTTTPELALAAADRTDGLLQRGEPIHPMSGIPVGVKDLFCTKGVRTTACSNILKNFVPTYESTVSQKLWDSGAVMLGKLNMDEFAMGSSNTYSCFGPVKNPWKGTEGKDLTPGGSSGGSSAAVAGLLCAGALGSDTGGSVRQPAALCGVVGAKPTYGRCSRWGMIAYASSLDQAGVLARTVEDAAVMLNAICGYDQKDSTSSQEAVPDFLGGISRDVRGVRIGIPKEYELPKNRGDIAAMWDQNIKHLLDCGAEIVEISLPHTTYALPVYYILASSEASSNLARYDGIRYGTRVEGETIDEMYELTRSLNFGEEVKRRMLIGAYTLSSGYRRAYYDKAQRVRCLVIRDFEEAFKKVDCILALTTPVEATGIEEPLSAMDRYFTDVFTVPASLAGLPAISVPAGLSERKLPMALQVIGNYHDECGMLNLAAVIYEHSGGVLQHLHGF.

Catalysis depends on charge relay system residues Lys79 and Ser158. Ser182 (acyl-ester intermediate) is an active-site residue.

This sequence belongs to the amidase family. GatA subfamily. In terms of assembly, heterotrimer of A, B and C subunits.

It carries out the reaction L-glutamyl-tRNA(Gln) + L-glutamine + ATP + H2O = L-glutaminyl-tRNA(Gln) + L-glutamate + ADP + phosphate + H(+). Its function is as follows. Allows the formation of correctly charged Gln-tRNA(Gln) through the transamidation of misacylated Glu-tRNA(Gln) in organisms which lack glutaminyl-tRNA synthetase. The reaction takes place in the presence of glutamine and ATP through an activated gamma-phospho-Glu-tRNA(Gln). The sequence is that of Glutamyl-tRNA(Gln) amidotransferase subunit A from Anaplasma marginale (strain Florida).